An 806-amino-acid polypeptide reads, in one-letter code: MLTSKEKSDTKRLPMMPIRDVVIFPYMMTPFVVGRESSVRALEEAMAGDKKIFLATQHDASIDEPKPNEIYSVGTIVNIVQSLKLPDGNIKVLVEGVERAKVVSVADDEGFFRATVRTSGFKVETGPQLDALISRVTTLFEQYVKLSQNLNYETMVAAIRVDEPGKLADTVGANLQLTIEEKQELLEIFDPIDRLTRVAEMLDIEIEKLNVDRTIQGRVKRQMEKAQKEYYLNEKIKAIQKELGRGEKSEIDELKRRIEEAGMTADAQEKAMAELKRLENMPPMSAESTVSRNYLDWLLAVPWKKKSKEIRDLKFAEGVLEADHYGLEKIKERILEFLAVRRLVKNPKGSILCFVGPPGVGKTSLGMSIAKATGRKFVRMSLGGVRDEAEVRGHRRTYIGALPGQIIQMMKKAGTRNPVFMLDEVDKMSMDFRGDPSAALLEVLDPEQNFMFVDHYLDVEYDLSQVFFVATANVMHTIPAALQDRMEVIRLSGYTELEKMEIAKRFLVKKQIEATGLDSKQIDFQDDGINSLIQYYTREAGVRNLEREIGNVCRKVARQVVNAESGKDKKAPAKAVINGDKVPELLGPWKFRDLVVEKKNEIGAATGLAWTEVGGQLLTVECTLMEGKGKLTITGKLGEVMQESAQAAMSYIRSRAMSLGIPRDFYRNLDLHIHIPEGAIPKDGPSAGITLATTICSALTKIPVRGDLAMTGEITLRGKVLPIGGLKEKLMAAHRHGILEAIMPKENEKDLPDIPDAIKKTMKLHFVESMDEVLKIALEREIVALPIPGAELPVEAGKPAEETVAH.

The 194-residue stretch at 13–206 (LPMMPIRDVV…RVAEMLDIEI (194 aa)) folds into the Lon N-terminal domain. An ATP-binding site is contributed by 356-363 (GPPGVGKT). In terms of domain architecture, Lon proteolytic spans 599–780 (KNEIGAATGL…DEVLKIALER (182 aa)). Active-site residues include serine 686 and lysine 729.

Belongs to the peptidase S16 family. As to quaternary structure, homohexamer. Organized in a ring with a central cavity.

Its subcellular location is the cytoplasm. It carries out the reaction Hydrolysis of proteins in presence of ATP.. In terms of biological role, ATP-dependent serine protease that mediates the selective degradation of mutant and abnormal proteins as well as certain short-lived regulatory proteins. Required for cellular homeostasis and for survival from DNA damage and developmental changes induced by stress. Degrades polypeptides processively to yield small peptide fragments that are 5 to 10 amino acids long. Binds to DNA in a double-stranded, site-specific manner. The sequence is that of Lon protease from Solibacter usitatus (strain Ellin6076).